The sequence spans 555 residues: Glucose-6-phosphate isomerase (555 aa).

E365 (proton donor) is an active-site residue. Active-site residues include H396 and K522.

The protein belongs to the GPI family.

The protein resides in the cytoplasm. It catalyses the reaction alpha-D-glucose 6-phosphate = beta-D-fructose 6-phosphate. Its pathway is carbohydrate biosynthesis; gluconeogenesis. It functions in the pathway carbohydrate degradation; glycolysis; D-glyceraldehyde 3-phosphate and glycerone phosphate from D-glucose: step 2/4. In terms of biological role, catalyzes the reversible isomerization of glucose-6-phosphate to fructose-6-phosphate. The polypeptide is Glucose-6-phosphate isomerase (Psychrobacter cryohalolentis (strain ATCC BAA-1226 / DSM 17306 / VKM B-2378 / K5)).